Reading from the N-terminus, the 180-residue chain is Putative 5'(3')-deoxyribonucleotidase (180 aa).

D9 functions as the Nucleophile in the catalytic mechanism. 3 residues coordinate Mg(2+): D9, D11, and D135. Catalysis depends on D11, which acts as the Proton donor.

Belongs to the 5'(3')-deoxyribonucleotidase family. Mg(2+) is required as a cofactor.

Dephosphorylates the 5' and 2'(3')-phosphates of deoxyribonucleotides. In Staphylococcus aureus (strain MSSA476), this protein is Putative 5'(3')-deoxyribonucleotidase.